We begin with the raw amino-acid sequence, 490 residues long: Capsid protein (490 aa).

Residues 79 to 143 (GETSEEESDS…TQPKTIPGQK (65 aa)) form a disordered region. The span at 81–94 (TSEEESDSGEEPEF) shows a compositional bias: acidic residues. Over residues 95–111 (EQVRMDRTGGTEIPKEE) the composition is skewed to basic and acidic residues. Positions 122–125 (RKRK) match the Nuclear localization signal motif. The CCHC-type zinc finger occupies 411–428 (CRCWICNIEGHYANECPN). Residues 464–490 (YKEEEEETSTEEDDGSSTSEDSDSESD) form a disordered region. Acidic residues predominate over residues 465–490 (KEEEEETSTEEDDGSSTSEDSDSESD).

This sequence belongs to the caulimoviridae capsid protein family. In terms of assembly, interacts (via nuclear localization signal) with host importin alpha.

It localises to the virion. The protein resides in the host nucleus. Self assembles to form an icosahedral capsid, about 50 nm in diameter, nm, composed of 420 subunits of the viral capsid protein. The capsid encapsulates the genomic dsDNA. Following virus entry into host cell, provides nuclear import of the viral genome. Virus particles do not enter the nucleus, but dock at the nuclear membrane through the interaction with host importins. This chain is Capsid protein, found in Arabidopsis thaliana (Mouse-ear cress).